A 148-amino-acid chain; its full sequence is MILRGCTMALERYNVSQPKRQAERGENTADPALAAGRACSTAELVARRLGIAAVQPVYRFLDTWWRKGCWSGEITRLTAVRSACGADAARGGVLVRRGRAADGHYSVSCRRGVCAQLPRTGWPFELLRLAMEGNSRGAPAGGTCTVLP.

In terms of biological role, this protein is essential to promote the specific transfer of the plasmid in the presence of conjugative plasmids. In Escherichia coli, this protein is Mobilization protein MobB (mobB).